The following is a 461-amino-acid chain: Bifunctional protein HldE (461 aa).

The segment at 1-312 (MLEFLSQQKP…IKSFKRVDFE (312 aa)) is ribokinase. 191 to 194 (NKKE) serves as a coordination point for ATP. The active site involves D259. Residues 334–461 (FTNGCFDIVH…KIIEKIKDKK (128 aa)) are cytidylyltransferase.

In the N-terminal section; belongs to the carbohydrate kinase PfkB family. The protein in the C-terminal section; belongs to the cytidylyltransferase family. Homodimer.

It carries out the reaction D-glycero-beta-D-manno-heptose 7-phosphate + ATP = D-glycero-beta-D-manno-heptose 1,7-bisphosphate + ADP + H(+). The enzyme catalyses D-glycero-beta-D-manno-heptose 1-phosphate + ATP + H(+) = ADP-D-glycero-beta-D-manno-heptose + diphosphate. Its pathway is nucleotide-sugar biosynthesis; ADP-L-glycero-beta-D-manno-heptose biosynthesis; ADP-L-glycero-beta-D-manno-heptose from D-glycero-beta-D-manno-heptose 7-phosphate: step 1/4. It functions in the pathway nucleotide-sugar biosynthesis; ADP-L-glycero-beta-D-manno-heptose biosynthesis; ADP-L-glycero-beta-D-manno-heptose from D-glycero-beta-D-manno-heptose 7-phosphate: step 3/4. The protein operates within bacterial outer membrane biogenesis; LOS core biosynthesis. Functionally, catalyzes the phosphorylation of D-glycero-D-manno-heptose 7-phosphate at the C-1 position to selectively form D-glycero-beta-D-manno-heptose-1,7-bisphosphate. Its function is as follows. Catalyzes the ADP transfer from ATP to D-glycero-beta-D-manno-heptose 1-phosphate, yielding ADP-D-glycero-beta-D-manno-heptose. The polypeptide is Bifunctional protein HldE (hldE) (Campylobacter jejuni subsp. jejuni serotype O:2 (strain ATCC 700819 / NCTC 11168)).